We begin with the raw amino-acid sequence, 393 residues long: NAD(P)H-quinone oxidoreductase subunit H, chloroplastic (393 aa).

This sequence belongs to the complex I 49 kDa subunit family. In terms of assembly, NDH is composed of at least 16 different subunits, 5 of which are encoded in the nucleus.

The protein localises to the plastid. Its subcellular location is the chloroplast thylakoid membrane. The enzyme catalyses a plastoquinone + NADH + (n+1) H(+)(in) = a plastoquinol + NAD(+) + n H(+)(out). It carries out the reaction a plastoquinone + NADPH + (n+1) H(+)(in) = a plastoquinol + NADP(+) + n H(+)(out). Its function is as follows. NDH shuttles electrons from NAD(P)H:plastoquinone, via FMN and iron-sulfur (Fe-S) centers, to quinones in the photosynthetic chain and possibly in a chloroplast respiratory chain. The immediate electron acceptor for the enzyme in this species is believed to be plastoquinone. Couples the redox reaction to proton translocation, and thus conserves the redox energy in a proton gradient. This is NAD(P)H-quinone oxidoreductase subunit H, chloroplastic from Solanum bulbocastanum (Wild potato).